A 756-amino-acid polypeptide reads, in one-letter code: Polyribonucleotide nucleotidyltransferase (756 aa).

Mg(2+) contacts are provided by aspartate 547 and aspartate 553. Positions 613–672 constitute a KH domain; that stretch reads PRITSVTIPVNKIGELIGPKGKTINAITEETGADVSIEEDGTVYISAATGEAADAAIDRV. Residues 684–753 enclose the S1 motif domain; that stretch reads GERFLGTVVK…NRGKISLVPV (70 aa).

It belongs to the polyribonucleotide nucleotidyltransferase family. The cofactor is Mg(2+).

The protein localises to the cytoplasm. It catalyses the reaction RNA(n+1) + phosphate = RNA(n) + a ribonucleoside 5'-diphosphate. In terms of biological role, involved in mRNA degradation. Catalyzes the phosphorolysis of single-stranded polyribonucleotides processively in the 3'- to 5'-direction. This Corynebacterium aurimucosum (strain ATCC 700975 / DSM 44827 / CIP 107346 / CN-1) (Corynebacterium nigricans) protein is Polyribonucleotide nucleotidyltransferase.